A 1049-amino-acid chain; its full sequence is Probable ATP-dependent permease (1049 aa).

The N-terminal stretch at 1–25 (MGSHRRYLYYSILSFLLLSCSVVLA) is a signal peptide. Over 26–324 (KQDKTPFFEG…KDPTVSWQGK (299 aa)) the chain is Lumenal. Asparagine 50, asparagine 114, asparagine 165, and asparagine 221 each carry an N-linked (GlcNAc...) asparagine glycan. Residues 325–345 (LVLALTAVMVLALFTFATFYI) traverse the membrane as a helical segment. Residues 346–463 (SKSPLFRNGL…ISMDRKSFSK (118 aa)) are Cytoplasmic-facing. The ABC transporter domain maps to 384–631 (LSFENITYSV…LRNEGYICPD (248 aa)). 423 to 430 (GGSGAGKT) provides a ligand contact to ATP. A helical membrane pass occupies residues 464–481 (IIGFVDQDDFLLPTLTVF). Residues 482 to 793 (ETVLNSALLR…SFKNMYRNPK (312 aa)) are Lumenal-facing. Phosphoserine is present on residues serine 659 and serine 702. Residues 793-1044 (KLLLGNYLLT…IMGYLALKWI (252 aa)) form the ABC transmembrane type-2 domain. A helical transmembrane segment spans residues 794 to 814 (LLLGNYLLTILLSLFLGTLYY). The Cytoplasmic portion of the chain corresponds to 815-828 (NVSNDISGFQNRMG). Residues 829–849 (LFFFILTYFGFVTFTGLSSFA) form a helical membrane-spanning segment. Topologically, residues 850-877 (LERIIFIKERSNNYYSPLAYYISKIMSE) are lumenal. The helical transmembrane segment at 878 to 898 (VVPLRVVPPILLSLIVYPMTG) threads the bilayer. Residues 899 to 909 (LNMKDNAFFKC) are Cytoplasmic-facing. The helical transmembrane segment at 910–930 (IGILILFNLGISLEILTIGII) threads the bilayer. At 931–937 (FEDLNNS) the chain is on the lumenal side. Asparagine 935 carries N-linked (GlcNAc...) asparagine glycosylation. A helical transmembrane segment spans residues 938-958 (IILSVLVLLGSLLFSGLFINT). At 959–1000 (KNITNVAFKYLKNFSVFYYAYESLLINEVKTLMLKERKYGLN) the chain is on the cytoplasmic side. A helical membrane pass occupies residues 1001–1021 (IEVPGATILSTFGFVVQNLVF). Over 1022–1024 (DIK) the chain is Lumenal. A helical transmembrane segment spans residues 1025 to 1045 (ILALFNVVFLIMGYLALKWIV). The Cytoplasmic segment spans residues 1046–1049 (VEQK).

It belongs to the ABC transporter superfamily. ABCG family. Eye pigment precursor importer (TC 3.A.1.204) subfamily.

It is found in the endoplasmic reticulum membrane. In Saccharomyces cerevisiae (strain ATCC 204508 / S288c) (Baker's yeast), this protein is Probable ATP-dependent permease (ADP1).